A 1064-amino-acid chain; its full sequence is Valine--tRNA ligase, mitochondrial (1064 aa).

The transit peptide at 1–26 (MPHLPLASFRPPFWGLRHSRGLPRFH) directs the protein to the mitochondrion. The interval 25–65 (FHSVSTQSEPHGSPISRRNREAKQKRLREKQATLETDIAGE) is disordered. Positions 42–56 (RNREAKQKRLREKQA) are enriched in basic and acidic residues. The 'HIGH' region motif lies at 146-156 (PNVTGSLHIGH). Positions 659 to 663 (KMSKS) match the 'KMSKS' region motif. An ATP-binding site is contributed by lysine 662.

The protein belongs to the class-I aminoacyl-tRNA synthetase family.

It localises to the mitochondrion. The catalysed reaction is tRNA(Val) + L-valine + ATP = L-valyl-tRNA(Val) + AMP + diphosphate. Catalyzes the attachment of valine to tRNA(Val) in a two-step reaction: valine is first activated by ATP to form Val-AMP and then transferred to the acceptor end of tRNA(Val). The protein is Valine--tRNA ligase, mitochondrial (VARS2) of Macaca mulatta (Rhesus macaque).